The sequence spans 103 residues: SOSS complex subunit C (103 aa).

This sequence belongs to the SOSS-C family. Belongs to the multiprotein complex Integrator. Component of the SOSS complex, composed of soss-b (soss-b1/nabp2 or soss-b2/nabp1), soss-a/ints3 and soss-c/inip.

It localises to the nucleus. In terms of biological role, component of the SOSS complex, a multiprotein complex that functions downstream of the MRN complex to promote DNA repair and G2/M checkpoint. The SOSS complex associates with single-stranded DNA at DNA lesions and influences diverse endpoints in the cellular DNA damage response including cell-cycle checkpoint activation, recombinational repair and maintenance of genomic stability. Required for efficient homologous recombination-dependent repair of double-strand breaks (DSBs). The sequence is that of SOSS complex subunit C (inip) from Danio rerio (Zebrafish).